We begin with the raw amino-acid sequence, 332 residues long: Probable allantoicase (332 aa).

The protein belongs to the allantoicase family.

The enzyme catalyses allantoate + H2O = (S)-ureidoglycolate + urea. The protein operates within nitrogen metabolism; (S)-allantoin degradation; (S)-ureidoglycolate from allantoate (aminidohydrolase route): step 1/1. This chain is Probable allantoicase, found in Pseudomonas aeruginosa (strain UCBPP-PA14).